The chain runs to 74 residues: MDLSKRSAENVEYMIEQLKQKLKVMNFDALKPSHFSEEWYDELKDIYEMVMKRETFSPSEMQAIVEELGNLRKK.

This sequence belongs to the UPF0435 family.

This chain is UPF0435 protein GTNG_0390, found in Geobacillus thermodenitrificans (strain NG80-2).